The following is a 415-amino-acid chain: Imidazolonepropionase (415 aa).

Fe(3+)-binding residues include His-74 and His-76. His-74 and His-76 together coordinate Zn(2+). Residues Arg-83, Tyr-146, and His-179 each coordinate 4-imidazolone-5-propanoate. An N-formimidoyl-L-glutamate-binding site is contributed by Tyr-146. His-244 is a Fe(3+) binding site. Zn(2+) is bound at residue His-244. Gln-247 is a 4-imidazolone-5-propanoate binding site. Asp-319 contributes to the Fe(3+) binding site. Asp-319 serves as a coordination point for Zn(2+). The N-formimidoyl-L-glutamate site is built by Asn-321 and Gly-323. 4-imidazolone-5-propanoate is bound at residue Thr-324.

The protein belongs to the metallo-dependent hydrolases superfamily. HutI family. Requires Zn(2+) as cofactor. Fe(3+) serves as cofactor.

It localises to the cytoplasm. It carries out the reaction 4-imidazolone-5-propanoate + H2O = N-formimidoyl-L-glutamate. It participates in amino-acid degradation; L-histidine degradation into L-glutamate; N-formimidoyl-L-glutamate from L-histidine: step 3/3. Catalyzes the hydrolytic cleavage of the carbon-nitrogen bond in imidazolone-5-propanoate to yield N-formimidoyl-L-glutamate. It is the third step in the universal histidine degradation pathway. This Cupriavidus metallidurans (strain ATCC 43123 / DSM 2839 / NBRC 102507 / CH34) (Ralstonia metallidurans) protein is Imidazolonepropionase.